We begin with the raw amino-acid sequence, 425 residues long: Serine--tRNA ligase (425 aa).

Residue Thr230–Glu232 coordinates L-serine. Residue Arg261–Glu263 participates in ATP binding. L-serine is bound at residue Glu284. An ATP-binding site is contributed by Glu348–Ser351. Ser385 is an L-serine binding site.

This sequence belongs to the class-II aminoacyl-tRNA synthetase family. Type-1 seryl-tRNA synthetase subfamily. As to quaternary structure, homodimer. The tRNA molecule binds across the dimer.

The protein resides in the cytoplasm. It catalyses the reaction tRNA(Ser) + L-serine + ATP = L-seryl-tRNA(Ser) + AMP + diphosphate + H(+). It carries out the reaction tRNA(Sec) + L-serine + ATP = L-seryl-tRNA(Sec) + AMP + diphosphate + H(+). It functions in the pathway aminoacyl-tRNA biosynthesis; selenocysteinyl-tRNA(Sec) biosynthesis; L-seryl-tRNA(Sec) from L-serine and tRNA(Sec): step 1/1. Its function is as follows. Catalyzes the attachment of serine to tRNA(Ser). Is also able to aminoacylate tRNA(Sec) with serine, to form the misacylated tRNA L-seryl-tRNA(Sec), which will be further converted into selenocysteinyl-tRNA(Sec). The chain is Serine--tRNA ligase from Wolbachia pipientis wMel.